A 215-amino-acid polypeptide reads, in one-letter code: Sodium channel regulatory subunit beta-3 (215 aa).

Positions 1–22 (MPAFNRLFPLASLLLILWVGVC) are cleaved as a signal peptide. Residues 23–156 (FPVCVEVPSE…EEAGEDFTSV (134 aa)) lie on the Extracellular side of the membrane. 2 disulfide bridges follow: Cys-26–Cys-48 and Cys-45–Cys-120. One can recognise an Ig-like C2-type domain in the interval 32-154 (ETEAVQGNPM…VTEEAGEDFT (123 aa)). N-linked (GlcNAc...) asparagine glycans are attached at residues Asn-95, Asn-109, Asn-113, and Asn-121. Residues 157 to 178 (VSEIMMYILLVFLTLWLLIEMI) traverse the membrane as a helical segment. Topologically, residues 179–215 (YCYRKVSKAEEAAQENASDYLAIPSENKENSAVPVEE) are cytoplasmic.

It belongs to the sodium channel auxiliary subunit SCN3B (TC 8.A.17) family. As to quaternary structure, a voltage-gated sodium (Nav) channel consists of an ion-conducting pore-forming alpha subunit functional on its own that is regulated by one or more beta subunits. Forms homodimers and homotrimers. SCN3B is non-covalently associated with alpha subunits and induces the formation of alpha subunit oligomers, including trimers. Interacts with SCN5A/Nav1.5; regulatory subunit of SCN5A/Nav1.5. Interacts with SCN7A/Nav2.1; probable regulatory subunit of SCN7A/Nav2.1. Interacts with SCN10A; regulatory subunit of SCN10A/Nav1.8. Interacts with NFASC; probably involved in targeting the sodium channels to the nodes of Ranvier. Intramolecular disulfide bonds favor the voltage-gated sodium channel oligomeric complex assembly. In terms of processing, N-glycosylated.

Its subcellular location is the cell membrane. In terms of biological role, regulatory subunit of multiple voltage-gated sodium (Nav) channels directly mediating the depolarization of excitable membranes. Navs, also called VGSCs (voltage-gated sodium channels) or VDSCs (voltage-dependent sodium channels), operate by switching between closed and open conformations depending on the voltage difference across the membrane. In the open conformation they allow Na(+) ions to selectively pass through the pore, along their electrochemical gradient. The influx of Na+ ions provokes membrane depolarization, initiating the propagation of electrical signals throughout cells and tissues. The accessory beta subunits participate in localization and functional modulation of the Nav channels. Modulates the activity of SCN2A/Nav1.2, causing a hyperpolarizing shift in the voltage-dependence of inactivation of the channel and increasing the fraction of channels operating in the fast gating mode. Modulates the activity of SCN5A/Nav1.5. Could also regulate the atypical sodium channel SCN7A/Nav2.1. Modulates the activity of SCN10A/Nav1.8, regulating its oligomerization and accelerating the recovery from inactivation. This chain is Sodium channel regulatory subunit beta-3, found in Bos taurus (Bovine).